A 148-amino-acid chain; its full sequence is MGPEEKTIMTERSAAVFIQAWWRGMLVRRTLLHAALRAWIIQCWWRQVLEKLLAKRRRMVLEFYVQQEWAAVRLQSWVRMWCVRQRYCRLLNAVRIIQVYWRWHSCHSRVFIEGHYELKENQLNIQLEISLGLQACKVQQCIPLPLKE.

IQ domains are found at residues 11 to 40 (ERSA…RAWI) and 67 to 96 (QEWA…AVRI).

In Homo sapiens (Human), this protein is IQ domain-containing protein F5 (IQCF5).